Reading from the N-terminus, the 314-residue chain is Deoxyhypusine hydroxylase (314 aa).

Methionine 1 carries the post-translational modification N-acetylmethionine. 5 HEAT-like PBS-type repeats span residues 61–87 (LAHEAAFALGQMQDAEAIPALESVLND), 94–120 (VRHEAAEALGAIGLAGNVNILKKSLSS), 188–214 (ERYAALFALRNHGGEEAVSAIVDSLSA), 219–245 (LRHEVAYVLGQLQSKTALATLSKVLRD), and 252–278 (VRHEAAEALGSIADEQSIALLEEFSKD). 4 residues coordinate Fe cation: histidine 63, glutamate 64, histidine 96, and glutamate 97. Residues histidine 221, glutamate 222, histidine 254, and glutamate 255 each contribute to the Fe cation site.

The protein belongs to the deoxyhypusine hydroxylase family. Fe(2+) is required as a cofactor.

It carries out the reaction [eIF5A protein]-deoxyhypusine + AH2 + O2 = [eIF5A protein]-hypusine + A + H2O. It participates in protein modification; eIF5A hypusination. Catalyzes the hydroxylation of the N(6)-(4-aminobutyl)-L-lysine intermediate to form hypusine, an essential post-translational modification only found in mature eIF-5A factor. This chain is Deoxyhypusine hydroxylase, found in Arabidopsis thaliana (Mouse-ear cress).